Reading from the N-terminus, the 314-residue chain is Ribosomal protein L11 methyltransferase (314 aa).

Residues Thr152, Gly184, Asp206, and Asn248 each coordinate S-adenosyl-L-methionine.

Belongs to the methyltransferase superfamily. PrmA family.

The protein localises to the cytoplasm. The catalysed reaction is L-lysyl-[protein] + 3 S-adenosyl-L-methionine = N(6),N(6),N(6)-trimethyl-L-lysyl-[protein] + 3 S-adenosyl-L-homocysteine + 3 H(+). Its function is as follows. Methylates ribosomal protein L11. This is Ribosomal protein L11 methyltransferase from Geotalea daltonii (strain DSM 22248 / JCM 15807 / FRC-32) (Geobacter daltonii).